We begin with the raw amino-acid sequence, 549 residues long: Calcium-dependent protein kinase 5 (549 aa).

Gly-2 is lipidated: N-myristoyl glycine. A disordered region spans residues 43–69 (DEPAGKKAPRGSAAAADAPHAASMKRG). Residues 52-64 (RGSAAAADAPHAA) show a composition bias toward low complexity. A Protein kinase domain is found at 92-350 (YALGRKLGQG…AHEVLCHPWI (259 aa)). ATP contacts are provided by residues 98-106 (LGQGQFGTT) and Lys-121. Asp-216 functions as the Proton acceptor in the catalytic mechanism. Residues 356–386 (APDRPLDPAVLSRIKQFSAMNKLKKMALRVI) form an autoinhibitory domain region. EF-hand domains follow at residues 393 to 428 (EEIAGLKEMFKAMDTDNSGAITYDELKEGMRKYGST), 429 to 464 (LKDTEIRDLMEAADVDNSGTIDYIEFIAATLHLNKL), 465 to 500 (EREEHLVAAFSYFDKDGSGYITVDELQQACKEHNMP), and 501 to 534 (DAFLDDVIKEADQDNDGRIDYGEFVAMMTKGNMG). 19 residues coordinate Ca(2+): Asp-406, Asp-408, Ser-410, Glu-417, Asp-442, Asp-444, Ser-446, Thr-448, Glu-453, Asp-478, Asp-480, Ser-482, Tyr-484, Glu-489, Asp-512, Asp-514, Asp-516, Arg-518, and Glu-523.

The protein belongs to the protein kinase superfamily. Ser/Thr protein kinase family. CDPK subfamily.

The protein localises to the membrane. It catalyses the reaction L-seryl-[protein] + ATP = O-phospho-L-seryl-[protein] + ADP + H(+). The catalysed reaction is L-threonyl-[protein] + ATP = O-phospho-L-threonyl-[protein] + ADP + H(+). With respect to regulation, activated by calcium. Autophosphorylation may play an important role in the regulation of the kinase activity. Its function is as follows. May play a role in signal transduction pathways that involve calcium as a second messenger. This is Calcium-dependent protein kinase 5 from Oryza sativa subsp. japonica (Rice).